We begin with the raw amino-acid sequence, 340 residues long: Glyceraldehyde-3-phosphate dehydrogenase (340 aa).

Residues 13 to 14 (TI) and Gly112 contribute to the NAD(+) site. A D-glyceraldehyde 3-phosphate-binding site is contributed by 141–143 (SCN). Cys142 (nucleophile) is an active-site residue. Arg170 is a binding site for NAD(+). Residue 196 to 197 (HG) coordinates D-glyceraldehyde 3-phosphate. An NAD(+)-binding site is contributed by Gln302.

The protein belongs to the glyceraldehyde-3-phosphate dehydrogenase family. Homotetramer.

The protein localises to the cytoplasm. The enzyme catalyses D-glyceraldehyde 3-phosphate + phosphate + NADP(+) = (2R)-3-phospho-glyceroyl phosphate + NADPH + H(+). The catalysed reaction is D-glyceraldehyde 3-phosphate + phosphate + NAD(+) = (2R)-3-phospho-glyceroyl phosphate + NADH + H(+). The protein operates within carbohydrate degradation; glycolysis; pyruvate from D-glyceraldehyde 3-phosphate: step 1/5. The polypeptide is Glyceraldehyde-3-phosphate dehydrogenase (gap) (Archaeoglobus fulgidus (strain ATCC 49558 / DSM 4304 / JCM 9628 / NBRC 100126 / VC-16)).